A 664-amino-acid polypeptide reads, in one-letter code: Macoilin-1 (664 aa).

4 helical membrane passes run 28–48 (TFLY…DFVL), 75–95 (AFSV…LLFI), 120–140 (VCLP…AIRF), and 154–174 (FAAH…KSYV). The disordered stretch occupies residues 206-225 (QMLQRQERETEEATSKGMSE). The span at 210-219 (RQERETEEAT) shows a compositional bias: basic and acidic residues. Residues asparagine 234, asparagine 336, asparagine 339, asparagine 348, and asparagine 655 are each glycosylated (N-linked (GlcNAc...) asparagine). 2 disordered regions span residues 315-364 (VGAG…LAPH) and 644-664 (FMDT…PLKK). Over residues 334–348 (SHNSTNGSVPSSSSN) the composition is skewed to low complexity. Polar residues predominate over residues 644-658 (FMDTSPSSLDPNASV).

This sequence belongs to the macoilin family.

It is found in the nucleus membrane. The protein resides in the rough endoplasmic reticulum membrane. Its function is as follows. May play a role in the regulation of neuronal activity. This Danio rerio (Zebrafish) protein is Macoilin-1.